A 585-amino-acid polypeptide reads, in one-letter code: Glutamate decarboxylase 2 (585 aa).

Over residues M1–E14 the composition is skewed to low complexity. Positions M1–G24 are disordered. Phosphoserine is present on residues S3, S6, S10, and S13. 2 S-palmitoyl cysteine lipidation sites follow: C30 and C45. A substrate-binding site is contributed by Q181–S183. At K396 the chain carries N6-(pyridoxal phosphate)lysine. R558 provides a ligand contact to substrate.

It belongs to the group II decarboxylase family. As to quaternary structure, homodimer. It depends on pyridoxal 5'-phosphate as a cofactor. Post-translationally, phosphorylated; which does not affect kinetic parameters or subcellular location. Palmitoylated; which is required for presynaptic clustering.

The protein resides in the cytoplasm. It localises to the cytosol. Its subcellular location is the cytoplasmic vesicle. The protein localises to the presynaptic cell membrane. It is found in the golgi apparatus membrane. The enzyme catalyses L-glutamate + H(+) = 4-aminobutanoate + CO2. Its function is as follows. Catalyzes the production of GABA. The protein is Glutamate decarboxylase 2 of Homo sapiens (Human).